The sequence spans 585 residues: A-type ATP synthase subunit A (585 aa).

231–238 (GPFGSGKT) lines the ATP pocket.

Belongs to the ATPase alpha/beta chains family. As to quaternary structure, has multiple subunits with at least A(3), B(3), C, D, E, F, H, I and proteolipid K(x).

Its subcellular location is the cell membrane. The enzyme catalyses ATP + H2O + 4 H(+)(in) = ADP + phosphate + 5 H(+)(out). Functionally, component of the A-type ATP synthase that produces ATP from ADP in the presence of a proton gradient across the membrane. The A chain is the catalytic subunit. The polypeptide is A-type ATP synthase subunit A (Thermococcus onnurineus (strain NA1)).